Consider the following 701-residue polypeptide: Epithelial splicing regulatory protein 2 (701 aa).

RRM domains are found at residues 226-303 (TVIR…KATG), 327-407 (VIIR…RSTA), and 448-523 (CVRL…VEVF).

It belongs to the ESRP family.

It is found in the nucleus. Its function is as follows. mRNA splicing factor that regulates the formation of epithelial cell-specific isoforms. Specifically regulates the expression of FGFR2-IIIb, an epithelial cell-specific isoform of FGFR2. Acts by directly binding specific sequences in mRNAs. Binds the GU-rich sequence motifs in the ISE/ISS-3, a cis-element regulatory region present in the mRNA of FGFR2. This Gallus gallus (Chicken) protein is Epithelial splicing regulatory protein 2 (ESRP2).